The sequence spans 265 residues: MIKWPWNNSQPQVQTLEHWQAAISIPLLAPLSDEEHQKLAALADQFLKQKRLIPLQELLLTDIMQRRIALLFSLPVLSLGIGALDGFHEVLVYPGPFIVEEEWQDDIGLVHTGKMVQSGQSWDQGPIVLNWQEVQDSFDLSGFNLIIHEVAHKLDIRSSGEATGVPLIPLRDIAVWEQHLHSAMDALQEEIDLVGEDAASMDPYAVHDPAECFAVLSEYFFSAPELLEERFPDLYRCFQKFYRQDPLARLKSWQNNINYRAPSIY.

4 residues coordinate Zn(2+): His-111, His-148, His-152, and Glu-211.

The protein belongs to the MtfA family. Interacts with Mlc. Zn(2+) is required as a cofactor.

It localises to the cytoplasm. Its function is as follows. Involved in the modulation of the activity of the glucose-phosphotransferase system (glucose-PTS). Interacts with the transcriptional repressor Mlc, preventing its interaction with DNA and leading to the modulation of expression of genes regulated by Mlc, including ptsG, which encodes the PTS system glucose-specific EIICB component. Functionally, shows zinc-dependent metallopeptidase activity. The sequence is that of Mlc titration factor A from Pectobacterium atrosepticum (strain SCRI 1043 / ATCC BAA-672) (Erwinia carotovora subsp. atroseptica).